The primary structure comprises 301 residues: Oxygen-dependent coproporphyrinogen-III oxidase (301 aa).

The tract at residues 49 to 58 (VMVDGAVIEK) is important for dimerization. A substrate-binding site is contributed by Ser-93. His-107 acts as the Proton donor in catalysis. Substrate contacts are provided by residues 109-111 (NVR) and 259-261 (GGR). An important for dimerization region spans residues 241–276 (YAEFNLVIDRGTKFGLQSGGRTESILISLPPRARWG).

This sequence belongs to the aerobic coproporphyrinogen-III oxidase family. As to quaternary structure, homodimer.

The protein localises to the cytoplasm. It carries out the reaction coproporphyrinogen III + O2 + 2 H(+) = protoporphyrinogen IX + 2 CO2 + 2 H2O. It functions in the pathway porphyrin-containing compound metabolism; protoporphyrin-IX biosynthesis; protoporphyrinogen-IX from coproporphyrinogen-III (O2 route): step 1/1. Its function is as follows. Involved in the heme biosynthesis. Catalyzes the aerobic oxidative decarboxylation of propionate groups of rings A and B of coproporphyrinogen-III to yield the vinyl groups in protoporphyrinogen-IX. The sequence is that of Oxygen-dependent coproporphyrinogen-III oxidase from Leishmania major.